A 432-amino-acid chain; its full sequence is Adenylosuccinate synthetase (432 aa).

GTP is bound by residues 13 to 19 (GDEGKGK) and 41 to 43 (GHT). Asp14 (proton acceptor) is an active-site residue. 2 residues coordinate Mg(2+): Asp14 and Gly41. IMP-binding positions include 14-17 (DEGK), 39-42 (NAGH), Thr130, Arg144, Gln225, Thr240, and Arg304. The Proton donor role is filled by His42. Substrate is bound at residue 300 to 306 (ATTGRRR). GTP-binding positions include Arg306, 332 to 334 (KLD), and 415 to 417 (STG).

This sequence belongs to the adenylosuccinate synthetase family. In terms of assembly, homodimer. It depends on Mg(2+) as a cofactor.

The protein localises to the cytoplasm. It carries out the reaction IMP + L-aspartate + GTP = N(6)-(1,2-dicarboxyethyl)-AMP + GDP + phosphate + 2 H(+). It functions in the pathway purine metabolism; AMP biosynthesis via de novo pathway; AMP from IMP: step 1/2. Functionally, plays an important role in the de novo pathway of purine nucleotide biosynthesis. Catalyzes the first committed step in the biosynthesis of AMP from IMP. The sequence is that of Adenylosuccinate synthetase from Klebsiella pneumoniae (strain 342).